The following is a 348-amino-acid chain: MNGTEGPNFYVPYSNKSGVVRSPYEEPQYYLAEPWMFSCLAAYMFMLIVLGFPINFLTLYVTIQHKKLRTPLNYILLNLAVADLFMVICGFTTTLVTSLNGYFVFGTTGCLVEGFFATTGGEVALWALVVLAIERYIVVCKPMSNFRFGENHAIMGVAFTWIMALACSVPPIFGWSRYIPEGMQCSCGIDYYTLNPEFNNESFVIYMFVVHFIIPLTVIFFCYGQLVFTVKEAAAQQQESATTQKAEKEVTRMVIIMVIAFLICWVPYASVAFYIFTHQGSDFGPIFMTLPAFFAKSSSIYNPVIYIMMNKQFRNCMITTLCCGKNPLGDDEASTTASKTETSQVAPA.

Residue M1 is modified to N-acetylmethionine. Residues 1-36 (MNGTEGPNFYVPYSNKSGVVRSPYEEPQYYLAEPWM) are Extracellular-facing. N-linked (GlcNAc...) asparagine glycosylation is found at N2 and N15. Residues 37-61 (FSCLAAYMFMLIVLGFPINFLTLYV) traverse the membrane as a helical segment. Topologically, residues 62–73 (TIQHKKLRTPLN) are cytoplasmic. The helical transmembrane segment at 74 to 96 (YILLNLAVADLFMVICGFTTTLV) threads the bilayer. Over 97–110 (TSLNGYFVFGTTGC) the chain is Extracellular. C110 and C187 are oxidised to a cystine. Residues 111-133 (LVEGFFATTGGEVALWALVVLAI) traverse the membrane as a helical segment. A 'Ionic lock' involved in activated form stabilization motif is present at residues 134–136 (ERY). At 134–152 (ERYIVVCKPMSNFRFGENH) the chain is on the cytoplasmic side. A helical transmembrane segment spans residues 153–173 (AIMGVAFTWIMALACSVPPIF). Topologically, residues 174–202 (GWSRYIPEGMQCSCGIDYYTLNPEFNNES) are extracellular. E201 is a binding site for Zn(2+). Residues 203 to 224 (FVIYMFVVHFIIPLTVIFFCYG) form a helical membrane-spanning segment. The Cytoplasmic portion of the chain corresponds to 225 to 252 (QLVFTVKEAAAQQQESATTQKAEKEVTR). The helical transmembrane segment at 253 to 274 (MVIIMVIAFLICWVPYASVAFY) threads the bilayer. At 275–286 (IFTHQGSDFGPI) the chain is on the extracellular side. Q279 lines the Zn(2+) pocket. Residues 287-308 (FMTLPAFFAKSSSIYNPVIYIM) form a helical membrane-spanning segment. K296 bears the N6-(retinylidene)lysine mark. The Cytoplasmic portion of the chain corresponds to 309 to 348 (MNKQFRNCMITTLCCGKNPLGDDEASTTASKTETSQVAPA). S-palmitoyl cysteine attachment occurs at residues C322 and C323. An interaction with SAG region spans residues 330 to 348 (DDEASTTASKTETSQVAPA). Position 334 is a phosphoserine (S334). A phosphothreonine mark is found at T335 and T336. S338 carries the phosphoserine modification. Phosphothreonine occurs at positions 340 and 342. S343 is modified (phosphoserine).

This sequence belongs to the G-protein coupled receptor 1 family. Opsin subfamily. Homodimer. May form a complex composed of RHO, GRK1 and RCVRN in a Ca(2+)-dependent manner; RCVRN prevents the interaction between GRK1 and RHO. Interacts with GRK1. Interacts (phosphorylated form) with SAG. Interacts with GNAT1. Interacts with GNAT3. SAG and G-proteins compete for a common binding site. Interacts with PRCD; the interaction promotes PRCD stability. Forms a complex with ASAP1 and ARF4. Forms a complex with ASAP1, RAB11A, Rabin8/RAB3IP, ARF4 and RAB11FIP3; the complex regulates Golgi-to-cilia rhodopsin/RHO transport in photoreceptors. In terms of processing, phosphorylated on some or all of the serine and threonine residues present in the C-terminal region. Contains one covalently linked retinal chromophore. Upon light absorption, the covalently bound 11-cis-retinal is converted to all-trans-retinal. After hydrolysis of the Schiff base and release of the covalently bound all-trans-retinal, active rhodopsin is regenerated by binding of a fresh molecule of 11-cis-retinal.

It is found in the membrane. The protein resides in the cell projection. Its subcellular location is the cilium. It localises to the photoreceptor outer segment. Functionally, photoreceptor required for image-forming vision at low light intensity. Required for photoreceptor cell viability after birth. Light-induced isomerization of 11-cis to all-trans retinal triggers a conformational change that activates signaling via G-proteins. Subsequent receptor phosphorylation mediates displacement of the bound G-protein alpha subunit by the arrestin SAG and terminates signaling. This Sminthopsis crassicaudata (Fat-tailed dunnart) protein is Rhodopsin (RHO).